The following is a 276-amino-acid chain: Lectin-like protein At3g16530 (276 aa).

The signal sequence occupies residues Met-1–Ala-19. The interval Val-20–Glu-270 is legume-lectin like. Residues Asn-79, Asn-129, and Asn-196 are each glycosylated (N-linked (GlcNAc...) asparagine).

The protein belongs to the leguminous lectin family.

Its subcellular location is the secreted. It is found in the extracellular space. The protein resides in the apoplast. This is Lectin-like protein At3g16530 from Arabidopsis thaliana (Mouse-ear cress).